The sequence spans 612 residues: Alpha-glycerophosphate oxidase (612 aa).

An FAD-binding site is contributed by D21–E49. A compositionally biased stretch (basic and acidic residues) spans E399–D408. A disordered region spans residues E399–F418.

The protein belongs to the FAD-dependent glycerol-3-phosphate dehydrogenase family. It depends on FAD as a cofactor.

It is found in the cytoplasm. The catalysed reaction is sn-glycerol 3-phosphate + O2 = dihydroxyacetone phosphate + H2O2. This chain is Alpha-glycerophosphate oxidase (glpO), found in Streptococcus pyogenes serotype M1.